The following is a 1092-amino-acid chain: Elongation factor 3 (1092 aa).

An ADP-binding site is contributed by Val-92. HEAT repeat units lie at residues 95–133 (MVKT…SPVS), 138–175 (PYMI…RLTP), 177–214 (ATKQ…TAPR), 218–255 (TAVP…LINN), 257–293 (DIEK…EVLP), 294–331 (PTLA…LVEK), and 333–370 (QIIA…KILT). ADP is bound at residue Glu-454. 2 ABC transporter domains span residues 486–704 (EELC…YYEL) and 730–1044 (LKVQ…DKNK). Asn-766, Glu-973, Asn-976, and His-1002 together coordinate ADP. Disordered stretches follow at residues 1023–1044 (TPTG…DKNK) and 1063–1092 (SKLS…DDDE). The segment covering 1063–1075 (SKLSGKDLRKKRK) has biased composition (basic residues). Basic and acidic residues predominate over residues 1076–1086 (EREARRKRGEE).

This sequence belongs to the ABC transporter superfamily. ABCF family. EF3 subfamily.

Its subcellular location is the cytoplasm. The protein resides in the cytosol. The catalysed reaction is ATP + H2O = ADP + phosphate + H(+). The protein operates within protein biosynthesis; polypeptide chain elongation. Ribosome-dependent ATPase that functions in cytoplasmic translation elongation. Required for the ATP-dependent release of deacylated tRNA from the ribosomal E-site during protein biosynthesis. Stimulates the eEF1A-dependent binding of aminoacyl-tRNA to the ribosomal A-site, which has reduced affinity for tRNA as long as the E-site is occupied. Assists translation termination by stimulating the release of nascent protein from the ribosome by release factors. This is Elongation factor 3 from Gonapodya prolifera (strain JEL478) (Monoblepharis prolifera).